The following is a 902-amino-acid chain: HTH-type transcriptional regulator MalT (902 aa).

Residue 39–46 (SPAGYGKT) coordinates ATP. Residues 832–897 (ELVRTSPLTQ…EAIVTAENLL (66 aa)) enclose the HTH luxR-type domain. Positions 856 to 875 (NEQIAQELDVAGTTIKTHIR) form a DNA-binding region, H-T-H motif.

The protein belongs to the MalT family. Monomer in solution. Oligomerizes to an active state in the presence of the positive effectors ATP and maltotriose.

With respect to regulation, activated by ATP and maltotriose, which are both required for DNA binding. In terms of biological role, positively regulates the transcription of the maltose regulon whose gene products are responsible for uptake and catabolism of malto-oligosaccharides. Specifically binds to the promoter region of its target genes, recognizing a short DNA motif called the MalT box. The chain is HTH-type transcriptional regulator MalT from Vibrio campbellii (strain ATCC BAA-1116).